Consider the following 1516-residue polypeptide: Lysine-specific demethylase 5C (1516 aa).

One can recognise a JmjN domain in the interval 14-55; the sequence is CPVFEPSWAEFRDPLGYIAKIRPIAEKSGICKIRPPADWQPP. An ARID domain is found at 24–128; that stretch reads FRDPLGYIAK…IVYPYEMYQS (105 aa). A compositionally biased stretch (basic and acidic residues) spans 142–151; it reads NEEKDKEYKP. A disordered region spans residues 142–186; that stretch reads NEEKDKEYKPHSIPLRQSVQPSKFNSYGRRAKRLQPDPEPTEEDI. The span at 156 to 166 shows a compositional bias: polar residues; the sequence is LRQSVQPSKFN. Glycyl lysine isopeptide (Lys-Gly) (interchain with G-Cter in SUMO2) cross-links involve residues Lys-164, Lys-188, Lys-203, and Lys-233. Residues 216 to 262 form a disordered region; the sequence is LRKKDKEGPECPPTVVVKEESGGDVKVESTSPKTFLESKEELSHSPE. Basic and acidic residues predominate over residues 232–242; the sequence is VKEESGGDVKV. The residue at position 246 (Ser-246) is a Phosphoserine. Lys-254 participates in a covalent cross-link: Glycyl lysine isopeptide (Lys-Gly) (interchain with G-Cter in SUMO2). Ser-260 and Ser-276 each carry phosphoserine. A PHD-type 1 zinc finger spans residues 283 to 333; that stretch reads SYVCRMCSRGDEDDKLLLCDGCDDNYHIFCLLPPLPEIPKGVWRCPKCVMA. Tyr-399 provides a ligand contact to 2-oxoglutarate. The JmjC domain maps to 427–593; it reads EYATSGWNLN…AGRQCIEHYR (167 aa). Fe cation contacts are provided by His-473 and Glu-475. Positions 481, 483, and 491 each coordinate 2-oxoglutarate. Residue His-561 participates in Fe cation binding. A C5HC2 zinc finger spans residues 666 to 718; the sequence is CIKCKTTCFLSALACYDCPDGLVCLSHINDLCKCSSSRQYLRYRYTLDELPAM. 2 positions are modified to phosphoserine: Ser-852 and Ser-856. Residue Lys-1086 forms a Glycyl lysine isopeptide (Lys-Gly) (interchain with G-Cter in SUMO2) linkage. The segment at 1144–1209 adopts a PHD-type 2 zinc-finger fold; the sequence is TSICVCGQVP…KFLCPLCMRS (66 aa). The segment at 1274–1305 is disordered; that stretch reads LQAEPRPEEPPTYPSTPAFDPLREGSGKDMPK. Positions 1294–1304 are enriched in basic and acidic residues; it reads PLREGSGKDMP. Residue Ser-1318 is modified to Phosphoserine. Residues 1400–1516 are disordered; sequence ERHGSRARGR…CPQQPPQQQL (117 aa). Over residues 1404–1419 the composition is skewed to basic residues; sequence SRARGRALERRRRRKV. Over residues 1420-1437 the composition is skewed to basic and acidic residues; that stretch reads DRGGEGDDPAREELEPKR. Residues 1444 to 1459 show a composition bias toward acidic residues; that stretch reads EAEEAHEEEELEEETG. 2 stretches are compositionally biased toward polar residues: residues 1471–1481 and 1489–1500; these read GSPSTQENQNG and SSGSSVPFSTLT.

The protein belongs to the JARID1 histone demethylase family. Part of two distinct complexes, one containing E2F6, and the other containing REST. Interacts with ZMYND8. Fe(2+) serves as cofactor.

It localises to the nucleus. It carries out the reaction N(6),N(6),N(6)-trimethyl-L-lysyl(4)-[histone H3] + 3 2-oxoglutarate + 3 O2 = L-lysyl(4)-[histone H3] + 3 formaldehyde + 3 succinate + 3 CO2. Histone demethylase that specifically demethylates 'Lys-4' of histone H3, thereby playing a central role in histone code. Does not demethylate histone H3 'Lys-9', H3 'Lys-27', H3 'Lys-36', H3 'Lys-79' or H4 'Lys-20'. Demethylates trimethylated and dimethylated but not monomethylated H3 'Lys-4'. Participates in transcriptional repression of neuronal genes by recruiting histone deacetylases and REST at neuron-restrictive silencer elements. The protein is Lysine-specific demethylase 5C (KDM5C) of Sus scrofa (Pig).